Reading from the N-terminus, the 271-residue chain is Low choriolytic enzyme (271 aa).

The signal sequence occupies residues 1 to 20 (MDLLAKASVLLLLLLSLSNA). Residues 21–71 (QTDNMEEAENGSSKEEIDESELEDVSSIIFRMNNNSMEELLEGDLVLPKTR) constitute a propeptide, activation peptide. Residues N30 and N54 are each glycosylated (N-linked (GlcNAc...) asparagine). The 200-residue stretch at 72-271 (NAMKCFGAPD…ILRVNKLYKC (200 aa)) folds into the Peptidase M12A domain. 3 cysteine pairs are disulfide-bonded: C76/C83, C123/C271, and C144/C164. H172 is a Zn(2+) binding site. E173 is a catalytic residue. H176 and H182 together coordinate Zn(2+). The N-linked (GlcNAc...) asparagine glycan is linked to N211.

Zn(2+) serves as cofactor.

It is found in the zymogen granule. It catalyses the reaction Hydrolysis of the inner layer of fish egg envelope. Also hydrolysis of casein and small molecule substrates such as succinyl-Leu-Leu-Val-Tyr-|-7-(4-methyl)coumarylamide.. In terms of biological role, participates in the breakdown of the egg envelope, which is derived from the egg extracellular matrix, at the time of hatching. Thus allowing the newly hatched fish to swim free. LCE solubilizes the egg envelope only after it has been swollen by the action of HCE. This Oryzias latipes (Japanese rice fish) protein is Low choriolytic enzyme (lce).